Reading from the N-terminus, the 284-residue chain is Bifunctional protein FolD (284 aa).

NADP(+)-binding positions include 166-168 (GAS) and isoleucine 232.

Belongs to the tetrahydrofolate dehydrogenase/cyclohydrolase family. Homodimer.

It carries out the reaction (6R)-5,10-methylene-5,6,7,8-tetrahydrofolate + NADP(+) = (6R)-5,10-methenyltetrahydrofolate + NADPH. The enzyme catalyses (6R)-5,10-methenyltetrahydrofolate + H2O = (6R)-10-formyltetrahydrofolate + H(+). It participates in one-carbon metabolism; tetrahydrofolate interconversion. Catalyzes the oxidation of 5,10-methylenetetrahydrofolate to 5,10-methenyltetrahydrofolate and then the hydrolysis of 5,10-methenyltetrahydrofolate to 10-formyltetrahydrofolate. This chain is Bifunctional protein FolD, found in Shewanella amazonensis (strain ATCC BAA-1098 / SB2B).